The sequence spans 304 residues: Probable UDP-3-O-acylglucosamine N-acyltransferase 2, mitochondrial (304 aa).

The N-terminal 47 residues, 1–47, are a transit peptide targeting the mitochondrion; sequence MAATLWRLYSKSICNSLQGIILNKPFIQKQLLLSSRTRSLSFSSDSQ. A UDP-N-acetyl-alpha-D-glucosamine-binding site is contributed by 159-161; it reads FGF. Hexadecanoate-binding residues include aspartate 209 and glutamine 213. Histidine 216 acts as the Proton acceptor in catalysis. Residues asparagine 217, serine 235, and histidine 253 each contribute to the UDP-N-acetyl-alpha-D-glucosamine site.

It belongs to the transferase hexapeptide repeat family. LpxD subfamily. In terms of assembly, homotrimer.

The protein localises to the mitochondrion. It carries out the reaction a UDP-3-O-[(3R)-3-hydroxyacyl]-alpha-D-glucosamine + a (3R)-hydroxyacyl-[ACP] = a UDP-2-N,3-O-bis[(3R)-3-hydroxyacyl]-alpha-D-glucosamine + holo-[ACP] + H(+). The protein operates within glycolipid biosynthesis; lipid IV(A) biosynthesis; lipid IV(A) from (3R)-3-hydroxytetradecanoyl-[acyl-carrier-protein] and UDP-N-acetyl-alpha-D-glucosamine: step 3/6. Its function is as follows. Involved in the biosynthesis of lipid A, a phosphorylated glycolipid that in bacteria anchors the lipopolysaccharide to the outer membrane of the cell. Lipid A-like molecules in plants may serve as structural components of the outer membranes of mitochondria and/or chloroplasts, or may be involved in signal transduction or plant defense responses. This chain is Probable UDP-3-O-acylglucosamine N-acyltransferase 2, mitochondrial (LPXD2), found in Arabidopsis thaliana (Mouse-ear cress).